The following is a 569-amino-acid chain: Proline--tRNA ligase (569 aa).

The protein belongs to the class-II aminoacyl-tRNA synthetase family. ProS type 1 subfamily. In terms of assembly, homodimer.

Its subcellular location is the cytoplasm. The enzyme catalyses tRNA(Pro) + L-proline + ATP = L-prolyl-tRNA(Pro) + AMP + diphosphate. Catalyzes the attachment of proline to tRNA(Pro) in a two-step reaction: proline is first activated by ATP to form Pro-AMP and then transferred to the acceptor end of tRNA(Pro). As ProRS can inadvertently accommodate and process non-cognate amino acids such as alanine and cysteine, to avoid such errors it has two additional distinct editing activities against alanine. One activity is designated as 'pretransfer' editing and involves the tRNA(Pro)-independent hydrolysis of activated Ala-AMP. The other activity is designated 'posttransfer' editing and involves deacylation of mischarged Ala-tRNA(Pro). The misacylated Cys-tRNA(Pro) is not edited by ProRS. The polypeptide is Proline--tRNA ligase (Shewanella woodyi (strain ATCC 51908 / MS32)).